Reading from the N-terminus, the 385-residue chain is Centrosomal protein of 44 kDa (385 aa).

Positions 11 to 192 (RNLEQVLRSL…GANIPEDTVT (182 aa)) are binds with microtubules and centrioles. Positions 126–154 (LEKTPSQQRKKTSSAKSEPCSSTEKTSTE) are disordered. The span at 139 to 154 (SAKSEPCSSTEKTSTE) shows a compositional bias: polar residues. Residues 230 to 271 (EVTALQSMLAECQEKLKKLTCIESRLESLEEKMKGKVLVNEK) adopt a coiled-coil conformation. Residues 303-348 (SEDYSSSSDMDSLNPDRKSKEERHANIPLSSGYSTVSSDSTPRTST) form a disordered region. The segment covering 305-314 (DYSSSSDMDS) has biased composition (low complexity). Basic and acidic residues predominate over residues 316–327 (NPDRKSKEERHA). The span at 332–342 (SSGYSTVSSDS) shows a compositional bias: low complexity. S342 is subject to Phosphoserine. Position 343 is a phosphothreonine (T343). A coiled-coil region spans residues 358–381 (SEETTMQKMERMKKMFEETAELLK).

As to quaternary structure, interacts with CROCC. Interacts with POC1B; the interaction is direct and recruits POC1B to centriolar microtubules. Binds to centriolar microtubules.

It localises to the cytoplasm. The protein resides in the cytoskeleton. The protein localises to the microtubule organizing center. Its subcellular location is the centrosome. It is found in the centriole. It localises to the spindle pole. The protein resides in the midbody. In terms of biological role, centriole-enriched microtubule-binding protein involved in centriole biogenesis. In collaboration with CEP295 and POC1B, is required for the centriole-to-centrosome conversion by ensuring the formation of bona fide centriole wall. Functions as a linker component that maintains centrosome cohesion. Associates with CROCC and regulates its stability and localization to the centrosome. The polypeptide is Centrosomal protein of 44 kDa (CEP44) (Bos taurus (Bovine)).